The chain runs to 597 residues: MATAPSPTTMGTYSSLISTNSFSTFLPNKSQLSLSGKSKHYVARRSSISCKATNNNNSNNQNEQQEESSRLLGKLDRRNILIGLGGLYGATTLDRKPFAFADPIAPPDLTTCKPAEITPGGSETVPCCPPVTTKIKTFKPDLSIPLRTSPAAHQVTDEYLAKFKKAQAAMRALPDDDPRSMVQQAKVHCAYCNGAYPQVGFTDNDIQVHFSWLFFPFHRMYLYFYERILGKLIDDPTFALPYWNWDSPVGFPIPDIYTDTSSPLYDQYRNADHQPPVLVDLSYGGKDDDVDEQTRIDENLAIMYRQMVSGAKTPDLFFGHAYRAGNLNTGKYPGTIENMPHNNIHIWVGDPSQTHQEDMGNFYSAGRDPLFYAHHANVDRMWNIWKTLGGKRKDITDTDWLDAEFLFYDENAELVRVKVRDSLEPEKQLRYNYEPVSLPWLFTKPTARKTKNKTKAKVAATQLTSKFPATLVEVTTVEVARPKPRKRSKKEKVDEEELLIIKDIEFEGTEAVKFDVFINDDAESLSRRDKSEFAGSFVHVPQGKTTKAKTKTNLKLGITDLLEDLGAEDDSSVLVTLVPRVSNSPITIGGFKIEYSS.

The transit peptide at Met-1–Ser-49 directs the protein to the chloroplast. The disordered stretch occupies residues Ser-49 to Arg-70. A thylakoid-targeting transit peptide spans Cys-50–Ala-101. Low complexity predominate over residues Asn-54–Glu-63. 2 cysteine pairs are disulfide-bonded: Cys-112-Cys-128 and Cys-127-Cys-189. Cu cation is bound by residues His-188, His-209, His-218, His-341, His-345, and His-375. The 2'-(S-cysteinyl)-histidine (Cys-His) cross-link spans Cys-192–His-209.

This sequence belongs to the tyrosinase family. Monomer. Cu(2+) is required as a cofactor. In terms of tissue distribution, expressed in immature-green fruit.

It is found in the plastid. The protein resides in the chloroplast thylakoid lumen. The catalysed reaction is 2 catechol + O2 = 2 1,2-benzoquinone + 2 H2O. Its activity is regulated as follows. Activated in the presence of substrate at low pH. Specific activity fluctuates during fruit ripening, starting at immature-green stage, reaching a peak at the breaker stage, followed by a sharp decrease until the half-ripe stage to remain stable during the following development stages. Triggered by CuSO(4) and by low concentrations of SDS. Repressed by several inhibitors including 4-hexylresorcinol, ascorbic acid, benzoic acid, kojic acid, glutathione (reduced form), L-cysteine and sodium metabisulfite. Inhibited by various salt such as FeSO(4), KCl, NaCl, CaCl(2), MnCl(2), NiCl(2) and AlCl(3). Spontaneously activated during storage at 4 degrees Celsius. Functionally, catalyzes the oxidation of mono- and o-diphenols to o-diquinones. Uses preferentially 4-methylcatechol and chlorogenic acid as substrates, followed by caffeic acid, pyrogallol, and catechol, but barely active toward dopamine and L-dopa. No activity detected with monophenols (e.g. phenol and tyramine). This chain is Polyphenol oxidase latent form, chloroplastic, found in Prunus armeniaca (Apricot).